The chain runs to 469 residues: 3-isopropylmalate dehydratase large subunit (469 aa).

The [4Fe-4S] cluster site is built by cysteine 350, cysteine 410, and cysteine 413.

The protein belongs to the aconitase/IPM isomerase family. LeuC type 1 subfamily. As to quaternary structure, heterodimer of LeuC and LeuD. [4Fe-4S] cluster serves as cofactor.

It carries out the reaction (2R,3S)-3-isopropylmalate = (2S)-2-isopropylmalate. It participates in amino-acid biosynthesis; L-leucine biosynthesis; L-leucine from 3-methyl-2-oxobutanoate: step 2/4. Catalyzes the isomerization between 2-isopropylmalate and 3-isopropylmalate, via the formation of 2-isopropylmaleate. The chain is 3-isopropylmalate dehydratase large subunit from Rhizobium meliloti (strain 1021) (Ensifer meliloti).